The sequence spans 236 residues: Probable glutathione S-transferase BZ2 (236 aa).

One can recognise a GST N-terminal domain in the interval 1 to 80 (MRVLGGEVSP…YIEDVARESG (80 aa)). Residues Ser9, Lys37, Ile51, and 64–65 (ES) contribute to the glutathione site. One can recognise a GST C-terminal domain in the interval 92 to 221 (DPYERAMHRF…LPDTEKVVQF (130 aa)).

Belongs to the GST superfamily. HSP26 family.

It catalyses the reaction RX + glutathione = an S-substituted glutathione + a halide anion + H(+). The protein operates within pigment biosynthesis; anthocyanin biosynthesis. The sequence is that of Probable glutathione S-transferase BZ2 (BZ2) from Zea mays (Maize).